The primary structure comprises 248 residues: MSSRKFFVGGNWKMNGDKKSLTELINTLNSGKISADTEVVCGAPTIYLDFARQKLDAKFAVSAQNCYKVAKGAFTGEISPAMIKDCGATWVILGHSERRHVFGESDELIGQKVAHALSENVGVIGCIGEKLDQREAGITEKVVFEQTKAIADNVKDWSKVVLAYEPVWAIGTGKTATPEQAQEVHKKLREWLKTNVSEDVAKSVRIIYGGSVTGGTCKELGAQPDIDGFLVGGASLKPEFIDIINAKQ.

Positions 11 and 13 each coordinate substrate. H95 functions as the Electrophile in the catalytic mechanism. E165 (proton acceptor) is an active-site residue.

Belongs to the triosephosphate isomerase family. Homodimer.

The protein localises to the cytoplasm. It catalyses the reaction dihydroxyacetone phosphate = methylglyoxal + phosphate. The enzyme catalyses D-glyceraldehyde 3-phosphate = dihydroxyacetone phosphate. It functions in the pathway carbohydrate degradation; glycolysis; D-glyceraldehyde 3-phosphate from glycerone phosphate: step 1/1. Its pathway is carbohydrate biosynthesis; gluconeogenesis. Triosephosphate isomerase is an extremely efficient metabolic enzyme that catalyzes the interconversion between dihydroxyacetone phosphate (DHAP) and D-glyceraldehyde-3-phosphate (G3P) in glycolysis and gluconeogenesis. Its function is as follows. It is also responsible for the non-negligible production of methylglyoxal a reactive cytotoxic side-product that modifies and can alter proteins, DNA and lipids. In Xenopus tropicalis (Western clawed frog), this protein is Triosephosphate isomerase (tpi1).